We begin with the raw amino-acid sequence, 347 residues long: Protein RecA (347 aa).

67–74 (GPESSGKT) contributes to the ATP binding site. The tract at residues 326-347 (DKLLPGRAPSSEAQGTESGQEA) is disordered. Over residues 336-347 (SEAQGTESGQEA) the composition is skewed to polar residues.

It belongs to the RecA family.

The protein localises to the cytoplasm. In terms of biological role, can catalyze the hydrolysis of ATP in the presence of single-stranded DNA, the ATP-dependent uptake of single-stranded DNA by duplex DNA, and the ATP-dependent hybridization of homologous single-stranded DNAs. It interacts with LexA causing its activation and leading to its autocatalytic cleavage. The protein is Protein RecA of Alkalilimnicola ehrlichii (strain ATCC BAA-1101 / DSM 17681 / MLHE-1).